The chain runs to 326 residues: Tagatose 1,6-diphosphate aldolase (326 aa).

This sequence belongs to the aldolase LacD family.

The enzyme catalyses D-tagatofuranose 1,6-bisphosphate = D-glyceraldehyde 3-phosphate + dihydroxyacetone phosphate. Its pathway is carbohydrate metabolism; D-tagatose 6-phosphate degradation; D-glyceraldehyde 3-phosphate and glycerone phosphate from D-tagatose 6-phosphate: step 2/2. The chain is Tagatose 1,6-diphosphate aldolase from Staphylococcus aureus (strain MW2).